Reading from the N-terminus, the 188-residue chain is Large ribosomal subunit protein bL9 (188 aa).

Over residues 149–170 (RSEEEAERQARGEEIGVEKEEP) the composition is skewed to basic and acidic residues. A disordered region spans residues 149–188 (RSEEEAERQARGEEIGVEKEEPSGFVEEALEETVEAPAEA).

Belongs to the bacterial ribosomal protein bL9 family.

Its function is as follows. Binds to the 23S rRNA. The polypeptide is Large ribosomal subunit protein bL9 (Gluconacetobacter diazotrophicus (strain ATCC 49037 / DSM 5601 / CCUG 37298 / CIP 103539 / LMG 7603 / PAl5)).